The sequence spans 297 residues: AKT-interacting protein (297 aa).

The segment covering 1–13 (MNLNPFWSMSTNT) has biased composition (polar residues). Residues 1-45 (MNLNPFWSMSTNTGRKRSDGEEQSGEQQQQQRASPARPSFGKKQL) are disordered. The segment covering 25-39 (GEQQQQQRASPARPS) has biased composition (low complexity). A UBC core domain is found at 79–227 (YLEYSLLAEF…VVDSVKLCNS (149 aa)). The interval 262–297 (KRRPEDHHKGLQVSGLSWVKPGSTQPFSKDDNPPQN) is disordered.

This sequence belongs to the ubiquitin-conjugating enzyme family. FTS subfamily.

Its subcellular location is the cytoplasm. The protein localises to the cell membrane. Functionally, may function to promote vesicle trafficking and/or fusion. May also regulate apoptosis. In Salmo salar (Atlantic salmon), this protein is AKT-interacting protein (aktip).